We begin with the raw amino-acid sequence, 455 residues long: Argininosuccinate lyase (455 aa).

The protein belongs to the lyase 1 family. Argininosuccinate lyase subfamily.

The protein resides in the cytoplasm. The catalysed reaction is 2-(N(omega)-L-arginino)succinate = fumarate + L-arginine. It participates in amino-acid biosynthesis; L-arginine biosynthesis; L-arginine from L-ornithine and carbamoyl phosphate: step 3/3. The polypeptide is Argininosuccinate lyase (Shewanella baltica (strain OS185)).